A 437-amino-acid chain; its full sequence is Enolase (437 aa).

Glutamine 162 is a (2R)-2-phosphoglycerate binding site. Glutamate 204 acts as the Proton donor in catalysis. Mg(2+) is bound by residues aspartate 251, glutamate 297, and aspartate 324. (2R)-2-phosphoglycerate is bound by residues lysine 349, arginine 378, serine 379, and lysine 400. The active-site Proton acceptor is the lysine 349.

It belongs to the enolase family. Mg(2+) serves as cofactor.

The protein localises to the cytoplasm. It is found in the secreted. Its subcellular location is the cell surface. The catalysed reaction is (2R)-2-phosphoglycerate = phosphoenolpyruvate + H2O. The protein operates within carbohydrate degradation; glycolysis; pyruvate from D-glyceraldehyde 3-phosphate: step 4/5. Its function is as follows. Catalyzes the reversible conversion of 2-phosphoglycerate (2-PG) into phosphoenolpyruvate (PEP). It is essential for the degradation of carbohydrates via glycolysis. In Pelodictyon phaeoclathratiforme (strain DSM 5477 / BU-1), this protein is Enolase.